The chain runs to 1401 residues: DNA-directed RNA polymerase subunit beta' (1401 aa).

Zn(2+) contacts are provided by Cys70, Cys72, Cys85, and Cys88. Asp460, Asp462, and Asp464 together coordinate Mg(2+). Zn(2+) contacts are provided by Cys808, Cys882, Cys889, and Cys892.

The protein belongs to the RNA polymerase beta' chain family. The RNAP catalytic core consists of 2 alpha, 1 beta, 1 beta' and 1 omega subunit. When a sigma factor is associated with the core the holoenzyme is formed, which can initiate transcription. Requires Mg(2+) as cofactor. Zn(2+) serves as cofactor.

The catalysed reaction is RNA(n) + a ribonucleoside 5'-triphosphate = RNA(n+1) + diphosphate. In terms of biological role, DNA-dependent RNA polymerase catalyzes the transcription of DNA into RNA using the four ribonucleoside triphosphates as substrates. The sequence is that of DNA-directed RNA polymerase subunit beta' from Legionella pneumophila (strain Corby).